Reading from the N-terminus, the 154-residue chain is MGLSDGEWQLVLNVWGKVEADIPGHGQEVLIRLFKGHPETLEKFDKFKHLKSEDEMKASEDLKKHGATVLTALGGILKKKGHHEAEIKPLAQSHATKHKIPVKYLEFISECIIQVLQSKHPGDFGADAQGAMNKALELFRKDMASNYKELGFQG.

In terms of domain architecture, Globin spans 2-148 (GLSDGEWQLV…FRKDMASNYK (147 aa)). S4 carries the phosphoserine modification. Position 65 (H65) interacts with nitrite. An O2-binding site is contributed by H65. A Phosphothreonine modification is found at T68. H94 is a binding site for heme b.

The protein belongs to the globin family. In terms of assembly, monomeric.

The protein localises to the cytoplasm. It is found in the sarcoplasm. It carries out the reaction Fe(III)-heme b-[protein] + nitric oxide + H2O = Fe(II)-heme b-[protein] + nitrite + 2 H(+). The enzyme catalyses H2O2 + AH2 = A + 2 H2O. In terms of biological role, monomeric heme protein which primary function is to store oxygen and facilitate its diffusion within muscle tissues. Reversibly binds oxygen through a pentacoordinated heme iron and enables its timely and efficient release as needed during periods of heightened demand. Depending on the oxidative conditions of tissues and cells, and in addition to its ability to bind oxygen, it also has a nitrite reductase activity whereby it regulates the production of bioactive nitric oxide. Under stress conditions, like hypoxia and anoxia, it also protects cells against reactive oxygen species thanks to its pseudoperoxidase activity. The chain is Myoglobin from Homo sapiens (Human).